Here is a 319-residue protein sequence, read N- to C-terminus: Ribonuclease Z (319 aa).

Residues His62, His64, Asp66, His67, His139, Asp209, and His268 each coordinate Zn(2+). The active-site Proton acceptor is Asp66.

It belongs to the RNase Z family. Homodimer. It depends on Zn(2+) as a cofactor.

The catalysed reaction is Endonucleolytic cleavage of RNA, removing extra 3' nucleotides from tRNA precursor, generating 3' termini of tRNAs. A 3'-hydroxy group is left at the tRNA terminus and a 5'-phosphoryl group is left at the trailer molecule.. Functionally, zinc phosphodiesterase, which displays some tRNA 3'-processing endonuclease activity. Probably involved in tRNA maturation, by removing a 3'-trailer from precursor tRNA. This is Ribonuclease Z from Pseudomonas putida (strain ATCC 47054 / DSM 6125 / CFBP 8728 / NCIMB 11950 / KT2440).